The chain runs to 456 residues: Exodeoxyribonuclease 7 large subunit (456 aa).

It belongs to the XseA family. As to quaternary structure, heterooligomer composed of large and small subunits.

It localises to the cytoplasm. It catalyses the reaction Exonucleolytic cleavage in either 5'- to 3'- or 3'- to 5'-direction to yield nucleoside 5'-phosphates.. In terms of biological role, bidirectionally degrades single-stranded DNA into large acid-insoluble oligonucleotides, which are then degraded further into small acid-soluble oligonucleotides. The sequence is that of Exodeoxyribonuclease 7 large subunit from Lactobacillus gasseri (strain ATCC 33323 / DSM 20243 / BCRC 14619 / CIP 102991 / JCM 1131 / KCTC 3163 / NCIMB 11718 / NCTC 13722 / AM63).